Reading from the N-terminus, the 597-residue chain is Elongation factor 4 (597 aa).

One can recognise a tr-type G domain in the interval 2–184 (NNIRNFSIIA…ALIAKVPPPK (183 aa)). Residues 14 to 19 (DHGKST) and 131 to 134 (NKID) contribute to the GTP site.

It belongs to the TRAFAC class translation factor GTPase superfamily. Classic translation factor GTPase family. LepA subfamily.

It localises to the cell inner membrane. The enzyme catalyses GTP + H2O = GDP + phosphate + H(+). Its function is as follows. Required for accurate and efficient protein synthesis under certain stress conditions. May act as a fidelity factor of the translation reaction, by catalyzing a one-codon backward translocation of tRNAs on improperly translocated ribosomes. Back-translocation proceeds from a post-translocation (POST) complex to a pre-translocation (PRE) complex, thus giving elongation factor G a second chance to translocate the tRNAs correctly. Binds to ribosomes in a GTP-dependent manner. The chain is Elongation factor 4 from Herminiimonas arsenicoxydans.